The sequence spans 294 residues: Lipoyl synthase (294 aa).

The [4Fe-4S] cluster site is built by Cys-35, Cys-40, Cys-46, Cys-61, Cys-65, Cys-68, and Ser-273. The Radical SAM core domain maps to 47-262 (FRQRQATFLI…REQALSMGFE (216 aa)).

This sequence belongs to the radical SAM superfamily. Lipoyl synthase family. It depends on [4Fe-4S] cluster as a cofactor.

It is found in the cytoplasm. The catalysed reaction is [[Fe-S] cluster scaffold protein carrying a second [4Fe-4S](2+) cluster] + N(6)-octanoyl-L-lysyl-[protein] + 2 oxidized [2Fe-2S]-[ferredoxin] + 2 S-adenosyl-L-methionine + 4 H(+) = [[Fe-S] cluster scaffold protein] + N(6)-[(R)-dihydrolipoyl]-L-lysyl-[protein] + 4 Fe(3+) + 2 hydrogen sulfide + 2 5'-deoxyadenosine + 2 L-methionine + 2 reduced [2Fe-2S]-[ferredoxin]. The protein operates within protein modification; protein lipoylation via endogenous pathway; protein N(6)-(lipoyl)lysine from octanoyl-[acyl-carrier-protein]: step 2/2. Functionally, catalyzes the radical-mediated insertion of two sulfur atoms into the C-6 and C-8 positions of the octanoyl moiety bound to the lipoyl domains of lipoate-dependent enzymes, thereby converting the octanoylated domains into lipoylated derivatives. The polypeptide is Lipoyl synthase (Geotalea daltonii (strain DSM 22248 / JCM 15807 / FRC-32) (Geobacter daltonii)).